A 219-amino-acid chain; its full sequence is uncharacterized protein (219 aa).

The next 2 membrane-spanning stretches (helical) occupy residues 8-28 (MILFLLVGLAVVLSGCATLSV) and 194-214 (GIPGFEAALAIVGLLAAGLLF).

It is found in the cell membrane. This is an uncharacterized protein from Archaeoglobus fulgidus (strain ATCC 49558 / DSM 4304 / JCM 9628 / NBRC 100126 / VC-16).